The chain runs to 62 residues: Conotoxin Qc5.2 (62 aa).

Positions 1 to 22 are cleaved as a signal peptide; the sequence is MRCVPVFIILLLLSPSAPSVDA. A propeptide spanning residues 23 to 48 is cleaved from the precursor; the sequence is HPMTKDDVPQASLHDDAKRTLQVPWM. Position 60 is a valine amide (valine 60).

It belongs to the conotoxin T superfamily. Post-translationally, contains 2 disulfide bonds that can be either 'C1-C3, C2-C4' or 'C1-C4, C2-C3', since these disulfide connectivities have been observed for conotoxins with cysteine framework V (for examples, see AC P0DQQ7 and AC P81755). In terms of tissue distribution, expressed by the venom duct.

It localises to the secreted. This is Conotoxin Qc5.2 from Conus quercinus (Oak cone).